We begin with the raw amino-acid sequence, 163 residues long: ATP synthase subunit b, sodium ion specific (163 aa).

A helical membrane pass occupies residues 9–29 (VSIDINMFWQIINFLILMFFF).

The protein belongs to the ATPase B chain family. As to quaternary structure, F-type ATPases have 2 components, F(1) - the catalytic core - and F(0) - the membrane proton channel. F(1) has five subunits: alpha(3), beta(3), gamma(1), delta(1), epsilon(1). F(0) has three main subunits: a(1), b(2) and c(10-14). The alpha and beta chains form an alternating ring which encloses part of the gamma chain. F(1) is attached to F(0) by a central stalk formed by the gamma and epsilon chains, while a peripheral stalk is formed by the delta and b chains.

The protein localises to the cell inner membrane. Functionally, f(1)F(0) ATP synthase produces ATP from ADP in the presence of a proton or sodium gradient. F-type ATPases consist of two structural domains, F(1) containing the extramembraneous catalytic core and F(0) containing the membrane proton channel, linked together by a central stalk and a peripheral stalk. During catalysis, ATP synthesis in the catalytic domain of F(1) is coupled via a rotary mechanism of the central stalk subunits to proton translocation. In terms of biological role, component of the F(0) channel, it forms part of the peripheral stalk, linking F(1) to F(0). The protein is ATP synthase subunit b, sodium ion specific (atpF) of Ilyobacter tartaricus.